A 303-amino-acid chain; its full sequence is Hydroxyacylglutathione hydrolase, mitochondrial (303 aa).

Zn(2+) is bound by residues His-97, His-99, Asp-101, His-102, His-153, and Asp-177. Substrate-binding positions include 186 to 188 (KFF), 216 to 218 (HEY), and 292 to 295 (RKEK). Residue His-216 participates in Zn(2+) binding.

Belongs to the metallo-beta-lactamase superfamily. Glyoxalase II family. Monomer. The cofactor is Zn(2+).

It localises to the mitochondrion matrix. The protein localises to the cytoplasm. The catalysed reaction is an S-(2-hydroxyacyl)glutathione + H2O = a 2-hydroxy carboxylate + glutathione + H(+). It carries out the reaction (R)-S-lactoylglutathione + H2O = (R)-lactate + glutathione + H(+). Thiolesterase that catalyzes the hydrolysis of S-D-lactoyl-glutathione to form glutathione and D-lactic acid. The polypeptide is Hydroxyacylglutathione hydrolase, mitochondrial (hagh) (Danio rerio (Zebrafish)).